Here is a 727-residue protein sequence, read N- to C-terminus: C-terminal-binding protein 1 (727 aa).

The THAP-type zinc finger occupies 5–60 (CGFPNCKFRSRYRGLEDNRHFYRIPKRPLILRQRWLTAIGRTEETVVSQLRICSAH). Residues 64–158 (GEKKEGDIPV…HPPVLPDPQQ (95 aa)) form a disordered region. A compositionally biased stretch (basic and acidic residues) spans 77–94 (TVDKQIKIELPPKESKNS). NAD(+) contacts are provided by residues Y251, 331 to 336 (LGCGRV), D355, 388 to 394 (CNLGDET), 415 to 417 (TSH), D441, and 467 to 470 (HSAW). A compositionally biased stretch (low complexity) spans 587-613 (ANAQRGSPANRSSRSSPSPHTNKSSVS). 2 disordered regions span residues 587–629 (ANAQ…SPAA) and 652–681 (APNG…GDEN).

This sequence belongs to the D-isomer specific 2-hydroxyacid dehydrogenase family. In terms of assembly, homodimer.

Functionally, binds DNA and represses gene expression. Plays a role in regulation of life span, possibly by regulating transcription of genes important for lipid metabolism. The chain is C-terminal-binding protein 1 from Caenorhabditis elegans.